The sequence spans 160 residues: Protein-export protein SecB (160 aa).

The protein belongs to the SecB family. Homotetramer, a dimer of dimers. One homotetramer interacts with 1 SecA dimer.

Its subcellular location is the cytoplasm. Its function is as follows. One of the proteins required for the normal export of preproteins out of the cell cytoplasm. It is a molecular chaperone that binds to a subset of precursor proteins, maintaining them in a translocation-competent state. It also specifically binds to its receptor SecA. This chain is Protein-export protein SecB, found in Rhizobium etli (strain ATCC 51251 / DSM 11541 / JCM 21823 / NBRC 15573 / CFN 42).